Here is a 286-residue protein sequence, read N- to C-terminus: KH domain-containing protein At2g38610 (286 aa).

Residue serine 2 is modified to N-acetylserine. The KH domain maps to glutamate 141–leucine 208. A disordered region spans residues serine 256 to cysteine 286. A phosphoserine mark is found at serine 263 and serine 273.

The protein localises to the nucleus. This chain is KH domain-containing protein At2g38610, found in Arabidopsis thaliana (Mouse-ear cress).